The chain runs to 416 residues: L-cysteine:1D-myo-inositol 2-amino-2-deoxy-alpha-D-glucopyranoside ligase (416 aa).

Residue cysteine 45 coordinates Zn(2+). L-cysteinyl-5'-AMP is bound by residues 45-48, threonine 60, and 83-85; these read CGIT and NVT. The 'HIGH' region signature appears at 47–57; that stretch reads ITPYDSTHLGH. The 'ERGGDP' region motif lies at 191–196; that stretch reads ERGGDP. Tryptophan 232 provides a ligand contact to L-cysteinyl-5'-AMP. Position 236 (cysteine 236) interacts with Zn(2+). 254–256 serves as a coordination point for L-cysteinyl-5'-AMP; that stretch reads GSD. Histidine 261 serves as a coordination point for Zn(2+). Position 286 (valine 286) interacts with L-cysteinyl-5'-AMP. The 'KMSKS' region signature appears at 292–296; it reads KMSKS.

This sequence belongs to the class-I aminoacyl-tRNA synthetase family. MshC subfamily. As to quaternary structure, monomer. Zn(2+) serves as cofactor.

The enzyme catalyses 1D-myo-inositol 2-amino-2-deoxy-alpha-D-glucopyranoside + L-cysteine + ATP = 1D-myo-inositol 2-(L-cysteinylamino)-2-deoxy-alpha-D-glucopyranoside + AMP + diphosphate + H(+). In terms of biological role, catalyzes the ATP-dependent condensation of GlcN-Ins and L-cysteine to form L-Cys-GlcN-Ins. This chain is L-cysteine:1D-myo-inositol 2-amino-2-deoxy-alpha-D-glucopyranoside ligase, found in Brachybacterium faecium (strain ATCC 43885 / DSM 4810 / JCM 11609 / LMG 19847 / NBRC 14762 / NCIMB 9860 / 6-10).